The chain runs to 398 residues: Energy-coupling factor transporter ATP-binding protein EcfA2 (398 aa).

The ABC transporter domain occupies 5 to 240; sequence IELKDLEYAY…KELVRRARLK (236 aa). 38-45 contributes to the ATP binding site; sequence GSNGAGKS.

This sequence belongs to the ABC transporter superfamily. Energy-coupling factor EcfA family. In terms of assembly, forms a stable energy-coupling factor (ECF) transporter complex composed of 2 membrane-embedded substrate-binding proteins (S component), 2 ATP-binding proteins (A component) and 2 transmembrane proteins (T component).

Its subcellular location is the cell membrane. Functionally, ATP-binding (A) component of a common energy-coupling factor (ECF) ABC-transporter complex. Unlike classic ABC transporters this ECF transporter provides the energy necessary to transport a number of different substrates. In Methanospirillum hungatei JF-1 (strain ATCC 27890 / DSM 864 / NBRC 100397 / JF-1), this protein is Energy-coupling factor transporter ATP-binding protein EcfA2.